Reading from the N-terminus, the 466-residue chain is Soluble pyridine nucleotide transhydrogenase (466 aa).

An FAD-binding site is contributed by 36-45; that stretch reads ERYQNVGGGC.

The protein belongs to the class-I pyridine nucleotide-disulfide oxidoreductase family. As to quaternary structure, homooligomer; probable homooctamer. FAD serves as cofactor.

It localises to the cytoplasm. The enzyme catalyses NAD(+) + NADPH = NADH + NADP(+). Its function is as follows. Conversion of NADPH, generated by peripheral catabolic pathways, to NADH, which can enter the respiratory chain for energy generation. The polypeptide is Soluble pyridine nucleotide transhydrogenase (Escherichia coli O6:H1 (strain CFT073 / ATCC 700928 / UPEC)).